The sequence spans 173 residues: Nascent polypeptide-associated complex subunit alpha (173 aa).

Positions 21 to 85 (VVHAEKAQKL…VTVEDMAAQA (65 aa)) constitute an NAC-A/B domain. Residues 89–117 (NESQKQATETKEEAAITEESGDAQPADTA) form a disordered region. A Phosphoserine modification is found at serine 122. Positions 134–171 (VDAKDIELVMAQANVSRAKAVTALKENNSDVVNAIMSL) constitute a UBA domain.

It belongs to the NAC-alpha family. As to quaternary structure, part of the nascent polypeptide-associated complex (NAC), consisting of ucp15 and btf3. NAC associates with ribosomes via btf3.

The protein localises to the cytoplasm. It localises to the nucleus. Functionally, component of the nascent polypeptide-associated complex (NAC), a dynamic component of the ribosomal exit tunnel, protecting the emerging polypeptides from interaction with other cytoplasmic proteins to ensure appropriate nascent protein targeting. The NAC complex also promotes mitochondrial protein import by enhancing productive ribosome interactions with the outer mitochondrial membrane and blocks the inappropriate interaction of ribosomes translating non-secretory nascent polypeptides with translocation sites in the membrane of the endoplasmic reticulum. Ucp15 may also be involved in transcription regulation. This Schizosaccharomyces pombe (strain 972 / ATCC 24843) (Fission yeast) protein is Nascent polypeptide-associated complex subunit alpha (egd2).